The following is an 860-amino-acid chain: DNA mismatch repair protein MutS (860 aa).

An ATP-binding site is contributed by 607–614; the sequence is GPNMSGKS.

This sequence belongs to the DNA mismatch repair MutS family.

In terms of biological role, this protein is involved in the repair of mismatches in DNA. It is possible that it carries out the mismatch recognition step. This protein has a weak ATPase activity. The chain is DNA mismatch repair protein MutS from Listeria innocua serovar 6a (strain ATCC BAA-680 / CLIP 11262).